The following is a 90-amino-acid chain: Bombyxin B-9 (90 aa).

A signal peptide spans 1-20; the sequence is MMKTAVMFILVVVISLTYSS. Intrachain disulfides connect cysteine 30–cysteine 75, cysteine 42–cysteine 88, and cysteine 74–cysteine 79. A propeptide spans 49 to 64 (c peptide like); it reads GGAQYAPYWQETYLRS.

This sequence belongs to the insulin family. In terms of assembly, heterodimer of a B chain and an A chain linked by two disulfide bonds.

Its subcellular location is the secreted. Its function is as follows. Brain peptide responsible for activation of prothoracic glands to produce ecdysone in insects. In Bombyx mori (Silk moth), this protein is Bombyxin B-9 (BBXB9).